Reading from the N-terminus, the 1057-residue chain is Desmoglein-1-alpha (1057 aa).

Positions 1 to 23 (MDWHSFRIAALLLTSLVVLEVNS) are cleaved as a signal peptide. A propeptide spanning residues 24–49 (EFQIQVRDHNAKNGTIKWHSIRRQKR) is cleaved from the precursor. 4 Cadherin domains span residues 50-157 (EWIK…PPVF), 158-269 (SMTT…IPYL), 270-389 (EQSS…RPGS), and 386-493 (RPGS…TGSE). Residues 50 to 564 (EWIKFAAACR…LYGDNVHFGP (515 aa)) lie on the Extracellular side of the membrane. Asn110 and Asn180 each carry an N-linked (GlcNAc...) asparagine glycan. Positions 490–552 (TGSESGGSSS…FQGDPDETLE (63 aa)) are disordered. A compositionally biased stretch (polar residues) spans 510–525 (NGYQGTSSTENPQRVT). The chain crosses the membrane as a helical span at residues 565–585 (AGIGLLIMGFLVLGLVPFLLI). The Cytoplasmic portion of the chain corresponds to 586-1057 (CCDCGGAPGG…TKYNTVQYSK (472 aa)). Desmoglein repeat repeat units lie at residues 832 to 858 (AYHS…TVRE), 859 to 888 (SYTT…ERVV), 889 to 918 (GPIS…ERVI), 919 to 946 (APGS…ERVI), and 947 to 975 (QPTS…ERVV).

Binds to JUP/plakoglobin. Interacts with PKP2. Interacts with DSC3; there is evidence to suggest that the interaction promotes cell-cell adhesion of keratinocytes. As to expression, expressed in testis.

It localises to the cell membrane. The protein localises to the cell junction. Its subcellular location is the desmosome. It is found in the cytoplasm. The protein resides in the nucleus. In terms of biological role, component of intercellular desmosome junctions. Involved in the interaction of plaque proteins and intermediate filaments mediating cell-cell adhesion. The chain is Desmoglein-1-alpha (Dsg1a) from Mus musculus (Mouse).